We begin with the raw amino-acid sequence, 1712 residues long: U3 small nucleolar RNA-associated protein 10 (1712 aa).

HEAT repeat units lie at residues 164–202 (EELV…GRGE), 490–528 (TCDF…ASGS), 564–605 (TLLS…PKHG), 987–1025 (TQTI…AFEH), 1236–1275 (VISL…RFGK), 1605–1646 (EEVT…DSAA), and 1667–1705 (LGLL…VLGE).

The protein belongs to the HEATR1/UTP10 family. As to quaternary structure, component of the ribosomal small subunit (SSU) processome.

It is found in the nucleus. It localises to the nucleolus. Functionally, involved in nucleolar processing of pre-18S ribosomal RNA. Involved in ribosome biosynthesis. The sequence is that of U3 small nucleolar RNA-associated protein 10 from Phaeosphaeria nodorum (strain SN15 / ATCC MYA-4574 / FGSC 10173) (Glume blotch fungus).